A 159-amino-acid polypeptide reads, in one-letter code: Small ribosomal subunit protein uS9 (159 aa).

It belongs to the universal ribosomal protein uS9 family.

This is Small ribosomal subunit protein uS9 from Rickettsia conorii (strain ATCC VR-613 / Malish 7).